A 466-amino-acid polypeptide reads, in one-letter code: Alpha-1A adrenergic receptor (466 aa).

The Extracellular portion of the chain corresponds to 1 to 27 (MVFLSGNASDSSNCTQPPAPVNISKAI). 3 N-linked (GlcNAc...) asparagine glycosylation sites follow: Asn-7, Asn-13, and Asn-22. Residues 28–51 (LLGVILGGLILFGVLGNILVILSV) traverse the membrane as a helical segment. At 52 to 64 (ACHRHLHSVTHYY) the chain is on the cytoplasmic side. A helical membrane pass occupies residues 65 to 88 (IVNLAVADLLLTSTVLPFSAIFEV). Topologically, residues 89 to 99 (LGYWAFGRVFC) are extracellular. Cysteines 99 and 176 form a disulfide. A helical membrane pass occupies residues 100–122 (NIWAAVDVLCCTASIMGLCIISI). The Cytoplasmic segment spans residues 123-143 (DRYIGVSYPLRYPTIVTQRRG). Residues 144 to 167 (LMALLCVWALSLVISIGPLFGWRQ) form a helical membrane-spanning segment. The Extracellular portion of the chain corresponds to 168 to 181 (PAPEDETICQINEE). A helical membrane pass occupies residues 182-205 (PGYVLFSALGSFYLPLAIILVMYC). Topologically, residues 206 to 273 (RVYVVAKRES…FSREKKAAKT (68 aa)) are cytoplasmic. Ser-215 carries the post-translational modification Phosphoserine; by PKA. Residues 274-297 (LGIVVGCFVLCWLPFFLVMPIGSF) form a helical membrane-spanning segment. Over 298–305 (FPDFKPSE) the chain is Extracellular. A helical membrane pass occupies residues 306-329 (TVFKIVFWLGYLNSCINPIIYPCS). The Cytoplasmic portion of the chain corresponds to 330–466 (SQEFKKAFQN…ISLSENGEEV (137 aa)). Positions 334–349 (KKAFQNVLRIQCLCRK) match the Nuclear localization signal motif. Cys-345 carries the S-palmitoyl cysteine lipid modification.

This sequence belongs to the G-protein coupled receptor 1 family. Adrenergic receptor subfamily. ADRA1A sub-subfamily. Homo- and heterooligomer. Heterooligomerizes with ADRA1B homooligomers in cardiac myocytes. Interacts with CAVIN4. C-terminal Ser or Thr residues may be phosphorylated. Expressed in heart, brain, liver and prostate, but not in kidney, lung, adrenal, aorta and pituitary. Within the prostate, expressed in the apex, base, periurethral and lateral lobe. Isoform 4 is the most abundant isoform expressed in the prostate with high levels also detected in liver and heart.

It localises to the nucleus membrane. Its subcellular location is the cell membrane. The protein localises to the cytoplasm. The protein resides in the membrane. It is found in the caveola. Its function is as follows. This alpha-adrenergic receptor mediates its action by association with G proteins that activate a phosphatidylinositol-calcium second messenger system. Its effect is mediated by G(q) and G(11) proteins. Nuclear ADRA1A-ADRA1B heterooligomers regulate phenylephrine(PE)-stimulated ERK signaling in cardiac myocytes. This chain is Alpha-1A adrenergic receptor (ADRA1A), found in Homo sapiens (Human).